Consider the following 186-residue polypeptide: UPF0398 protein LCA_0919 (186 aa).

The protein belongs to the UPF0398 family.

The protein is UPF0398 protein LCA_0919 of Latilactobacillus sakei subsp. sakei (strain 23K) (Lactobacillus sakei subsp. sakei).